Reading from the N-terminus, the 487-residue chain is GTPase Der (487 aa).

EngA-type G domains are found at residues 3 to 167 (LTLA…DEME) and 203 to 378 (LQVA…EVWN). Residues 9–16 (GRPNVGKS), 56–60 (DTAGL), and 119–122 (NKAE) each bind GTP. The span at 167 to 190 (EQQAEEQAPETDVDLDPEDEDGEE) shows a compositional bias: acidic residues. The disordered stretch occupies residues 167–191 (EQQAEEQAPETDVDLDPEDEDGEEV). Residues 209 to 216 (GRPNAGKS), 256 to 260 (DTAGM), and 321 to 324 (NKWD) contribute to the GTP site. In terms of domain architecture, KH-like spans 379-465 (RRIPTAALNR…RLTLRGQGDK (87 aa)). A disordered region spans residues 458–487 (TLRGQGDKNPYKGRRKKNAGALAKHLKSRG). Residues 468–487 (YKGRRKKNAGALAKHLKSRG) are compositionally biased toward basic residues.

Belongs to the TRAFAC class TrmE-Era-EngA-EngB-Septin-like GTPase superfamily. EngA (Der) GTPase family. Associates with the 50S ribosomal subunit.

In terms of biological role, GTPase that plays an essential role in the late steps of ribosome biogenesis. This chain is GTPase Der, found in Ruegeria pomeroyi (strain ATCC 700808 / DSM 15171 / DSS-3) (Silicibacter pomeroyi).